A 319-amino-acid chain; its full sequence is tRNA uridine(34) hydroxylase (319 aa).

The region spanning 133–231 (EDPNSVVIDT…YLEDVSSENS (99 aa)) is the Rhodanese domain. Catalysis depends on C191, which acts as the Cysteine persulfide intermediate.

This sequence belongs to the TrhO family.

The catalysed reaction is uridine(34) in tRNA + AH2 + O2 = 5-hydroxyuridine(34) in tRNA + A + H2O. Functionally, catalyzes oxygen-dependent 5-hydroxyuridine (ho5U) modification at position 34 in tRNAs. The polypeptide is tRNA uridine(34) hydroxylase (Prochlorococcus marinus (strain NATL2A)).